The primary structure comprises 226 residues: Urease accessory protein UreF (226 aa).

Belongs to the UreF family. UreD, UreF and UreG form a complex that acts as a GTP-hydrolysis-dependent molecular chaperone, activating the urease apoprotein by helping to assemble the nickel containing metallocenter of UreC. The UreE protein probably delivers the nickel.

It is found in the cytoplasm. Required for maturation of urease via the functional incorporation of the urease nickel metallocenter. The sequence is that of Urease accessory protein UreF from Paraburkholderia phymatum (strain DSM 17167 / CIP 108236 / LMG 21445 / STM815) (Burkholderia phymatum).